The chain runs to 451 residues: Chromosomal replication initiator protein DnaA (451 aa).

The tract at residues Met-1–Arg-72 is domain I, interacts with DnaA modulators. The domain II stretch occupies residues Arg-72 to His-108. A domain III, AAA+ region region spans residues Met-109 to Ser-325. Gly-153, Gly-155, Lys-156, and Thr-157 together coordinate ATP. Residues Ser-326–Phe-451 form a domain IV, binds dsDNA region.

The protein belongs to the DnaA family. As to quaternary structure, oligomerizes as a right-handed, spiral filament on DNA at oriC.

The protein resides in the cytoplasm. In terms of biological role, plays an essential role in the initiation and regulation of chromosomal replication. ATP-DnaA binds to the origin of replication (oriC) to initiate formation of the DNA replication initiation complex once per cell cycle. Binds the DnaA box (a 9 base pair repeat at the origin) and separates the double-stranded (ds)DNA. Forms a right-handed helical filament on oriC DNA; dsDNA binds to the exterior of the filament while single-stranded (ss)DNA is stabiized in the filament's interior. The ATP-DnaA-oriC complex binds and stabilizes one strand of the AT-rich DNA unwinding element (DUE), permitting loading of DNA polymerase. After initiation quickly degrades to an ADP-DnaA complex that is not apt for DNA replication. Binds acidic phospholipids. In Listeria monocytogenes serotype 4b (strain F2365), this protein is Chromosomal replication initiator protein DnaA.